We begin with the raw amino-acid sequence, 472 residues long: Relaxin-3 receptor 1 (472 aa).

Residues 1–81 are Extracellular-facing; it reads MQVASATPAA…ESTDTEARVR (81 aa). N-linked (GlcNAc...) asparagine glycans are attached at residues N36 and N40. A helical membrane pass occupies residues 82–102; sequence ILISAVYWVVCALGLAGNLLV. At 103-119 the chain is on the cytoplasmic side; it reads LYLMKSKQGWRKSSINL. The chain crosses the membrane as a helical span at residues 120 to 140; that stretch reads FVTNLALTDFQFVLTLPFWAV. At 141–156 the chain is on the extracellular side; that stretch reads ENALDFKWPFGKAMCK. Residues C155 and C247 are joined by a disulfide bond. Residues 157–177 traverse the membrane as a helical segment; that stretch reads IVSMVTSMNMYASVFFLTAMS. Residues 178-215 lie on the Cytoplasmic side of the membrane; the sequence is VARYHSVASALKSHRTRGRGRGDCCGQSLRESCCFSAK. The chain crosses the membrane as a helical span at residues 216-236; sequence VLCGLIWASAALASLPNAIFS. At 237–270 the chain is on the extracellular side; it reads TTIRVLGEELCLMHFPDKLLGWDRQFWLGLYHLQ. A helical transmembrane segment spans residues 271-291; that stretch reads KVLLGFLLPLSIISLCYLLLV. Residues 292–298 lie on the Cytoplasmic side of the membrane; the sequence is RFISDRR. A helical membrane pass occupies residues 299-319; the sequence is VVGTTDAVGAAAAPGGGLSTA. Residues 320–332 lie on the Extracellular side of the membrane; the sequence is SARRRSKVTKSVT. The helical transmembrane segment at 333 to 353 threads the bilayer; it reads IVVLSFFLCWLPNQALTTWSI. Topologically, residues 354–472 are cytoplasmic; sequence LIKFNAVPFS…YDLLPSSSAY (119 aa).

This sequence belongs to the G-protein coupled receptor 1 family.

It localises to the cell membrane. In terms of biological role, receptor for RNL3/relaxin-3. Binding of the ligand inhibit cAMP accumulation. The sequence is that of Relaxin-3 receptor 1 (Rxfp3) from Mus musculus (Mouse).